Reading from the N-terminus, the 228-residue chain is MNNGILLNCQNLTKDYIEGSVTTRVLKDVTFSMNDKELVAIVGSSGSGKSTLLHTLGGLDQPTSGEVFIKGKSLQKASQDELAKLRNTYLGFVYQFHHLMADFTALENVLMPMLIGNQNKTEAKDRAEKMLNAVGLSHRITHKPSALSGGERQRVAIARALVNNPALVLADEPTGNLDHKTTESIFELIQQLNEDQGIAFLLVTHDLNLAEKLNRRLIMQDGVLRPEM.

Residues 7-228 (LNCQNLTKDY…MQDGVLRPEM (222 aa)) enclose the ABC transporter domain. Residue 43–50 (GSSGSGKS) coordinates ATP.

It belongs to the ABC transporter superfamily. Lipoprotein translocase (TC 3.A.1.125) family. The complex is composed of two ATP-binding proteins (LolD) and two transmembrane proteins (LolC and LolE).

The protein localises to the cell inner membrane. In terms of biological role, part of the ABC transporter complex LolCDE involved in the translocation of mature outer membrane-directed lipoproteins, from the inner membrane to the periplasmic chaperone, LolA. Responsible for the formation of the LolA-lipoprotein complex in an ATP-dependent manner. The protein is Lipoprotein-releasing system ATP-binding protein LolD of Mannheimia succiniciproducens (strain KCTC 0769BP / MBEL55E).